The primary structure comprises 572 residues: ATP-dependent lipid A-core flippase (572 aa).

A run of 5 helical transmembrane segments spans residues 14–34 (IIPYKIPLFIAMFAMIVVAAL), 55–75 (VFFLQILPLIIIAIFFTKGVL), 148–168 (IFLLGVIFYMNWKLALICFLI), 249–269 (MEIIGGFAVAGIIWVGGSEVI), and 272–292 (SATPGTFFAFLTAMITAYDPV). The region spanning 22-304 (FIAMFAMIVV…VSQVNSTIQQ (283 aa)) is the ABC transmembrane type-1 domain. Residues 338-571 (IEFHDVSFSY…EGEYQLLYNM (234 aa)) enclose the ABC transporter domain. 370-377 (GPSGGGKT) is an ATP binding site.

It belongs to the ABC transporter superfamily. Lipid exporter (TC 3.A.1.106) family. As to quaternary structure, homodimer.

It localises to the cell inner membrane. It carries out the reaction ATP + H2O + lipid A-core oligosaccharideSide 1 = ADP + phosphate + lipid A-core oligosaccharideSide 2.. In terms of biological role, involved in lipopolysaccharide (LPS) biosynthesis. Translocates lipid A-core from the inner to the outer leaflet of the inner membrane. Transmembrane domains (TMD) form a pore in the inner membrane and the ATP-binding domain (NBD) is responsible for energy generation. The chain is ATP-dependent lipid A-core flippase from Desulfotalea psychrophila (strain LSv54 / DSM 12343).